The following is a 364-amino-acid chain: Aminomethyltransferase (364 aa).

The protein belongs to the GcvT family. The glycine cleavage system is composed of four proteins: P, T, L and H.

It catalyses the reaction N(6)-[(R)-S(8)-aminomethyldihydrolipoyl]-L-lysyl-[protein] + (6S)-5,6,7,8-tetrahydrofolate = N(6)-[(R)-dihydrolipoyl]-L-lysyl-[protein] + (6R)-5,10-methylene-5,6,7,8-tetrahydrofolate + NH4(+). Functionally, the glycine cleavage system catalyzes the degradation of glycine. This chain is Aminomethyltransferase, found in Escherichia coli O127:H6 (strain E2348/69 / EPEC).